A 470-amino-acid chain; its full sequence is Uronate isomerase (470 aa).

This sequence belongs to the metallo-dependent hydrolases superfamily. Uronate isomerase family.

The catalysed reaction is D-glucuronate = D-fructuronate. The enzyme catalyses aldehydo-D-galacturonate = keto-D-tagaturonate. It participates in carbohydrate metabolism; pentose and glucuronate interconversion. In Salmonella newport (strain SL254), this protein is Uronate isomerase.